Consider the following 210-residue polypeptide: Placenta-expressed transcript 1 protein (210 aa).

Positions 1–26 (MAVLGSPLLPLRLFLCFGLLFFSASC) are cleaved as a signal peptide. Over 27–189 (TDHPDQCMIF…THKNSANRVF (163 aa)) the chain is Extracellular. N-linked (GlcNAc...) asparagine glycosylation is found at Asn-67 and Asn-94. Residues 190-209 (RSPVRDAIQILLAFLTSKLL) form a helical membrane-spanning segment. A topological domain (cytoplasmic) is located at residue Phe-210.

Highly expressed in placenta.

It is found in the membrane. The protein localises to the apical cell membrane. Its function is as follows. Modulates leading keratinocyte migration and cellular adhesion to matrix proteins during a wound-healing response and promotes wound repair. May play a role during trichilemmal differentiation of the hair follicle. This chain is Placenta-expressed transcript 1 protein (PLET1), found in Sus scrofa (Pig).